The sequence spans 214 residues: 3-isopropylmalate dehydratase small subunit (214 aa).

This sequence belongs to the LeuD family. LeuD type 1 subfamily. In terms of assembly, heterodimer of LeuC and LeuD.

The enzyme catalyses (2R,3S)-3-isopropylmalate = (2S)-2-isopropylmalate. It participates in amino-acid biosynthesis; L-leucine biosynthesis; L-leucine from 3-methyl-2-oxobutanoate: step 2/4. Catalyzes the isomerization between 2-isopropylmalate and 3-isopropylmalate, via the formation of 2-isopropylmaleate. This chain is 3-isopropylmalate dehydratase small subunit, found in Pseudomonas fluorescens (strain ATCC BAA-477 / NRRL B-23932 / Pf-5).